A 167-amino-acid chain; its full sequence is uncharacterized protein (167 aa).

Positions 70-118 (KIVELRKAMESIITELAYIKGELKGLQEKGESKVERKEIIEEKIQKAMV) form a coiled coil. The segment covering 128–155 (EKEERKPAKESKRREHDVIIPEGKKEER) has biased composition (basic and acidic residues). Residues 128 to 167 (EKEERKPAKESKRREHDVIIPEGKKEERTDDGEDGLIVCD) form a disordered region.

This is an uncharacterized protein from Archaeoglobus fulgidus (strain ATCC 49558 / DSM 4304 / JCM 9628 / NBRC 100126 / VC-16).